A 270-amino-acid chain; its full sequence is Hydroxyethylthiazole kinase (270 aa).

Met44 is a binding site for substrate. Residues Arg119 and Thr165 each contribute to the ATP site. A substrate-binding site is contributed by Gly192.

The protein belongs to the Thz kinase family. Mg(2+) is required as a cofactor.

It carries out the reaction 5-(2-hydroxyethyl)-4-methylthiazole + ATP = 4-methyl-5-(2-phosphooxyethyl)-thiazole + ADP + H(+). The protein operates within cofactor biosynthesis; thiamine diphosphate biosynthesis; 4-methyl-5-(2-phosphoethyl)-thiazole from 5-(2-hydroxyethyl)-4-methylthiazole: step 1/1. In terms of biological role, catalyzes the phosphorylation of the hydroxyl group of 4-methyl-5-beta-hydroxyethylthiazole (THZ). This Corynebacterium efficiens (strain DSM 44549 / YS-314 / AJ 12310 / JCM 11189 / NBRC 100395) protein is Hydroxyethylthiazole kinase.